The chain runs to 725 residues: Protein ALEX (725 aa).

Disordered regions lie at residues 1–93, 177–226, 256–340, 396–481, 508–528, 584–624, and 638–675; these read MSPS…ARAQ, GAIA…PLTD, EPPL…PSQP, PILT…SPLL, PMQVHWSGEPGHSQLLPPLGH, LPGL…AASS, and ATRSGATQSATSSPEPSEAASVYPSVPDHDPSAPGRPR. Over residues 41-51 the composition is skewed to basic residues; that stretch reads HLRRKPCHSRH. The segment covering 260-276 has biased composition (polar residues); it reads GSTTTPLSIWTAPQSQV. Composition is skewed to basic and acidic residues over residues 297–307 and 314–326; these read QLSEKQPRWKE and RWKEKSPLRREGT. Pro residues-rich tracts occupy residues 423–442 and 459–473; these read PSQPPRQSLPPRPSLPPGQP and RSLPPGQPLSPPRSP. Low complexity-rich tracts occupy residues 584 to 598 and 643 to 658; these read LPGLTSTSGAEAAAG and ATQSATSSPEPSEAAS.

This sequence belongs to the ALEX family. Interacts with the N-terminal region of the XLas isoforms of guanine nucleotide-binding protein G(s) subunit alpha.

The protein resides in the cell membrane. The protein localises to the cell projection. It localises to the ruffle. Functionally, may inhibit the adenylyl cyclase-stimulating activity of guanine nucleotide-binding protein G(s) subunit alpha which is produced from the same locus in a different open reading frame. The polypeptide is Protein ALEX (Mus musculus (Mouse)).